We begin with the raw amino-acid sequence, 468 residues long: Phosphatidylinositol-binding clathrin assembly protein LAP (468 aa).

In terms of domain architecture, ENTH spans 16–158 (RHSLAGQGLA…LSYRAMAFDF (143 aa)). The disordered stretch occupies residues 438-468 (NAGDGTAKYDGGAGSSPFDWGATDDDGGAAQ). Residues 459–468 (ATDDDGGAAQ) are compositionally biased toward acidic residues.

The protein belongs to the PICALM/SNAP91 family. As to quaternary structure, binds clathrin and phosphatidylinositol 4,5-bisphosphate. As to expression, in embryos, expression is seen in central and peripheral nervous systems (brain and ventral nerve cord) and Garland cells. Coexpressed with clathrin at presynaptic boutons of neuromuscular junctions.

Its subcellular location is the membrane. The protein localises to the clathrin-coated pit. It is found in the golgi apparatus. It localises to the cytoplasmic vesicle. The protein resides in the clathrin-coated vesicle. Functionally, assembly protein recruiting clathrin and adaptor protein complex 2 (AP2) to cell membranes at sites of coated-pit formation and clathrin-vesicle assembly. May be required to determine the amount of membrane to be recycled, possibly by regulating the size of the clathrin cage. Involved in AP2-dependent clathrin-mediated endocytosis at the neuromuscular junction. The chain is Phosphatidylinositol-binding clathrin assembly protein LAP (lap) from Drosophila melanogaster (Fruit fly).